The primary structure comprises 473 residues: tRNA-2-methylthio-N(6)-dimethylallyladenosine synthase (473 aa).

Positions 5–125 (RKLHIKSYGC…LPQLLARADQ (121 aa)) constitute an MTTase N-terminal domain. Residues Cys-14, Cys-50, Cys-88, Cys-166, Cys-170, and Cys-173 each contribute to the [4Fe-4S] cluster site. Positions 152 to 384 (RARGISAFVT…QQLIDSQQSA (233 aa)) constitute a Radical SAM core domain. The TRAM domain occupies 387 to 459 (KAAIGQTVDV…RYSLLGELAA (73 aa)).

Belongs to the methylthiotransferase family. MiaB subfamily. Monomer. It depends on [4Fe-4S] cluster as a cofactor.

It is found in the cytoplasm. It catalyses the reaction N(6)-dimethylallyladenosine(37) in tRNA + (sulfur carrier)-SH + AH2 + 2 S-adenosyl-L-methionine = 2-methylsulfanyl-N(6)-dimethylallyladenosine(37) in tRNA + (sulfur carrier)-H + 5'-deoxyadenosine + L-methionine + A + S-adenosyl-L-homocysteine + 2 H(+). Functionally, catalyzes the methylthiolation of N6-(dimethylallyl)adenosine (i(6)A), leading to the formation of 2-methylthio-N6-(dimethylallyl)adenosine (ms(2)i(6)A) at position 37 in tRNAs that read codons beginning with uridine. The polypeptide is tRNA-2-methylthio-N(6)-dimethylallyladenosine synthase (Rhodopseudomonas palustris (strain BisB5)).